The following is a 396-amino-acid chain: S-arrestin (396 aa).

The protein belongs to the arrestin family.

Arrestin is one of the major proteins of the ros (retinal rod outer segments); it binds to photoactivated-phosphorylated rhodopsin, thereby apparently preventing the transducin-mediated activation of phosphodiesterase. The sequence is that of S-arrestin from Aquarana catesbeiana (American bullfrog).